A 396-amino-acid chain; its full sequence is Bone morphogenetic protein 2 (396 aa).

An N-terminal signal peptide occupies residues 1–23; that stretch reads MVAGTRCLLALLLPQVLLGGAAG. Positions 24 to 282 are cleaved as a propeptide — cleaved by PCSK5; it reads LIPELGRRKF…GHPLHRREKR (259 aa). Ser87 is modified (phosphoserine). Asn135, Asn163, Asn164, and Asn200 each carry an N-linked (GlcNAc...) asparagine glycan. The tract at residues 272 to 293 is disordered; it reads KGHPLHRREKRQAKHKQRKRLK. The span at 274–293 shows a compositional bias: basic residues; it reads HPLHRREKRQAKHKQRKRLK. 3 disulfides stabilise this stretch: Cys296/Cys361, Cys325/Cys393, and Cys329/Cys395. An N-linked (GlcNAc...) asparagine glycan is attached at Asn338.

The protein belongs to the TGF-beta family. As to quaternary structure, homodimer; disulfide-linked. Interacts with SOSTDC1. Interacts with GREM2, RGMA, RGMB and RGMC. Interacts with ASPN. Interacts with MAFP5. Interacts with FBN1 (via N-terminal domain) and FBN2. Interacts with type I receptor BMPR1A. Interacts with type II receptor BMPR2. Interacts with ERFE. Interacts with BMPR1A/ALK3; the interaction may induce HAMP expression. Interacts with TGFBR3.

It is found in the secreted. Growth factor of the TGF-beta superfamily that plays essential roles in many developmental processes, including cardiogenesis, neurogenesis, and osteogenesis. Induces cartilage and bone formation. Initiates the canonical BMP signaling cascade by associating with type I receptor BMPR1A and type II receptor BMPR2. Once all three components are bound together in a complex at the cell surface, BMPR2 phosphorylates and activates BMPR1A. In turn, BMPR1A propagates signal by phosphorylating SMAD1/5/8 that travel to the nucleus and act as activators and repressors of transcription of target genes. Also acts to promote expression of HAMP, via the interaction with its receptor BMPR1A/ALK3. Can also signal through non-canonical pathways such as ERK/MAP kinase signaling cascade that regulates osteoblast differentiation. Also stimulates the differentiation of myoblasts into osteoblasts via the EIF2AK3-EIF2A-ATF4 pathway by stimulating EIF2A phosphorylation which leads to increased expression of ATF4 which plays a central role in osteoblast differentiation. Acts as a positive regulator of odontoblast differentiation during mesenchymal tooth germ formation, expression is repressed during the bell stage by MSX1-mediated inhibition of CTNNB1 signaling. In Dama dama (Fallow deer), this protein is Bone morphogenetic protein 2 (BMP2).